The sequence spans 390 residues: Flavohemoprotein (390 aa).

An N-acetylserine modification is found at Ser2. Residues 12–149 (PLTPTEINFL…LAQTLIDAEA (138 aa)) enclose the Globin domain. Position 96 (His96) interacts with heme b. Catalysis depends on charge relay system residues Tyr106 and Glu148. Positions 157–390 (WEEFKDFRVT…EFFGPTDPDC (234 aa)) are reductase. The region spanning 158-263 (EEFKDFRVTK…HAPVGTMKYD (106 aa)) is the FAD-binding FR-type domain. Residues Tyr196 and 214–217 (REYS) contribute to the FAD site. 277–282 (GIGITP) is an NADP(+) binding site. 382 to 385 (FFGP) lines the FAD pocket.

Belongs to the globin family. Two-domain flavohemoproteins subfamily. This sequence in the C-terminal section; belongs to the flavoprotein pyridine nucleotide cytochrome reductase family. FAD is required as a cofactor. Requires heme b as cofactor.

The protein resides in the cytoplasm. The enzyme catalyses 2 nitric oxide + NADPH + 2 O2 = 2 nitrate + NADP(+) + H(+). The catalysed reaction is 2 nitric oxide + NADH + 2 O2 = 2 nitrate + NAD(+) + H(+). In terms of biological role, is involved in NO detoxification in an aerobic process, termed nitric oxide dioxygenase (NOD) reaction that utilizes O(2) and NAD(P)H to convert NO to nitrate, which protects the fungus from various noxious nitrogen compounds. Therefore, plays a central role in the inducible response to nitrosative stress. In the presence of oxygen and NADH, it has NADH oxidase activity, which leads to the generation of superoxide and H(2)O(2). Under anaerobic conditions, it also exhibits nitric oxide reductase and FAD reductase activities. However, all these reactions are much lower than NOD activity. This is Flavohemoprotein from Candida norvegensis (Yeast).